The sequence spans 511 residues: ATP synthase subunit alpha 1 (511 aa).

Residue 170 to 177 (GDRQTGKT) participates in ATP binding.

This sequence belongs to the ATPase alpha/beta chains family. In terms of assembly, F-type ATPases have 2 components, CF(1) - the catalytic core - and CF(0) - the membrane proton channel. CF(1) has five subunits: alpha(3), beta(3), gamma(1), delta(1), epsilon(1). CF(0) has three main subunits: a(1), b(2) and c(9-12). The alpha and beta chains form an alternating ring which encloses part of the gamma chain. CF(1) is attached to CF(0) by a central stalk formed by the gamma and epsilon chains, while a peripheral stalk is formed by the delta and b chains.

Its subcellular location is the cell inner membrane. The catalysed reaction is ATP + H2O + 4 H(+)(in) = ADP + phosphate + 5 H(+)(out). Its function is as follows. Produces ATP from ADP in the presence of a proton gradient across the membrane. The alpha chain is a regulatory subunit. This Gluconobacter oxydans (strain 621H) (Gluconobacter suboxydans) protein is ATP synthase subunit alpha 1.